A 113-amino-acid chain; its full sequence is MADLAVPLTFTDAAANKVKTLISEEENTELKLRVYITGGGCSGFQYGFTFDEKTNDGDLIVENSGVKLVVDPMSLQYLVGGTVDYTEGLEGSRFIVNNPNASTTCGCGSSFSI.

The iron-sulfur cluster site is built by cysteine 41, cysteine 105, and cysteine 107.

It belongs to the HesB/IscA family. As to quaternary structure, homodimer. The cofactor is iron-sulfur cluster.

Required for insertion of 4Fe-4S clusters for at least IspG. The protein is Iron-sulfur cluster insertion protein ErpA of Histophilus somni (strain 129Pt) (Haemophilus somnus).